The following is a 296-amino-acid chain: Acetyl-coenzyme A carboxylase carboxyl transferase subunit beta (296 aa).

Positions 26 to 295 constitute a CoA carboxyltransferase N-terminal domain; sequence VWTKCTNCEQ…PFKVGELIIE (270 aa). Residues cysteine 30, cysteine 33, cysteine 49, and cysteine 52 each contribute to the Zn(2+) site. Residues 30-52 form a C4-type zinc finger; that stretch reads CTNCEQVLYSEELKRNMQVCPKC.

This sequence belongs to the AccD/PCCB family. As to quaternary structure, acetyl-CoA carboxylase is a heterohexamer composed of biotin carboxyl carrier protein (AccB), biotin carboxylase (AccC) and two subunits each of ACCase subunit alpha (AccA) and ACCase subunit beta (AccD). Zn(2+) is required as a cofactor.

It localises to the cytoplasm. The catalysed reaction is N(6)-carboxybiotinyl-L-lysyl-[protein] + acetyl-CoA = N(6)-biotinyl-L-lysyl-[protein] + malonyl-CoA. It participates in lipid metabolism; malonyl-CoA biosynthesis; malonyl-CoA from acetyl-CoA: step 1/1. Functionally, component of the acetyl coenzyme A carboxylase (ACC) complex. Biotin carboxylase (BC) catalyzes the carboxylation of biotin on its carrier protein (BCCP) and then the CO(2) group is transferred by the transcarboxylase to acetyl-CoA to form malonyl-CoA. In Haemophilus ducreyi (strain 35000HP / ATCC 700724), this protein is Acetyl-coenzyme A carboxylase carboxyl transferase subunit beta.